Here is a 316-residue protein sequence, read N- to C-terminus: Porphobilinogen deaminase (316 aa).

Residue Cys245 is modified to S-(dipyrrolylmethanemethyl)cysteine.

It belongs to the HMBS family. In terms of assembly, monomer. It depends on dipyrromethane as a cofactor.

It catalyses the reaction 4 porphobilinogen + H2O = hydroxymethylbilane + 4 NH4(+). The protein operates within porphyrin-containing compound metabolism; protoporphyrin-IX biosynthesis; coproporphyrinogen-III from 5-aminolevulinate: step 2/4. It functions in the pathway porphyrin-containing compound metabolism; chlorophyll biosynthesis. In terms of biological role, tetrapolymerization of the monopyrrole PBG into the hydroxymethylbilane pre-uroporphyrinogen in several discrete steps. This chain is Porphobilinogen deaminase, found in Prochlorococcus marinus (strain MIT 9312).